The primary structure comprises 319 residues: Vomeronasal type-1 receptor 96 (319 aa).

At 1–19 (MNKVNILPSDTNIKITLFS) the chain is on the extracellular side. Residues 20-40 (EVSVGISANSVLFFAHLCMFF) form a helical membrane-spanning segment. Over 41–49 (EENRSKPID) the chain is Cytoplasmic. The helical transmembrane segment at 50-70 (LCIAFLSLTQLMLLVTMGLIA) threads the bilayer. Residues 71–93 (ADMFMSQGIWDSTTCRSIIYFHR) are Extracellular-facing. C85 and C172 form a disulfide bridge. Residues 94-114 (LLRGFNLCAACLLHILWTFTL) traverse the membrane as a helical segment. Residues 115–134 (SPRSSCLTKFKHKSPHHISC) are Cytoplasmic-facing. A helical transmembrane segment spans residues 135–155 (AFFSLCVLYMLFSSHLFVLII). The Extracellular segment spans residues 156–193 (ATSNLTSDHFMYVTQSCSILPMSYSRTTMFSLVMVTRE). N159 is a glycosylation site (N-linked (GlcNAc...) asparagine). The chain crosses the membrane as a helical span at residues 194 to 214 (AFLISLMALFSGYMVTLLWRH). The Cytoplasmic portion of the chain corresponds to 215–238 (KKQVQHLHSTSLSSKSSPQQRATR). The chain crosses the membrane as a helical span at residues 239–259 (TILLLMSFFVVLYILDIVIFQ). At 260-269 (SRTKFKDGSM) the chain is on the extracellular side. The chain crosses the membrane as a helical span at residues 270-290 (FYSLHIIVSHSYATISPFVFI). Topologically, residues 291 to 319 (FSDKRIIKFLGSMSGRIINICLFSDGYGP) are cytoplasmic.

It belongs to the G-protein coupled receptor 1 family.

The protein resides in the cell membrane. Putative pheromone receptor implicated in the regulation of social as well as reproductive behavior. The polypeptide is Vomeronasal type-1 receptor 96 (Vom1r96) (Rattus norvegicus (Rat)).